Reading from the N-terminus, the 409-residue chain is uncharacterized protein (409 aa).

Disordered regions lie at residues 12–32 (ENTE…LHCP), 133–160 (EVST…SREQ), and 194–213 (TVSS…GLST). The span at 134 to 160 (VSTQKSWSSEKNWSGLSQGPGTASREQ) shows a compositional bias: polar residues.

This is an uncharacterized protein from Mus musculus (Mouse).